The following is a 104-amino-acid chain: MGQCRSANAEDAQELSDVERAIETLIKNFHQYSVEGGKETLTPSELRDLVTQQLPHLMPSNCGLEEKIANLGNCNDSKLEFGSFWELIGEAAKSVKLENAVQGS.

One can recognise an EF-hand domain in the interval 27–61 (KNFHQYSVEGGKETLTPSELRDLVTQQLPHLMPSN).

The protein belongs to the S-100 family. In terms of assembly, homodimer. Interacts with AGER.

Its subcellular location is the cytoplasm. Functionally, modulates P53/TP53 protein levels, and thereby plays a role in the regulation of cell survival and apoptosis. Depending on the context, it can promote cell proliferation or apoptosis. Plays a role in the regulation of cell migration by modulating the levels of MMP2, a matrix protease that is under transcriptional control of P53/TP53. Does not bind calcium. The protein is Protein S100-A14 (S100A14) of Bos taurus (Bovine).